The sequence spans 125 residues: Protein AC4 (125 aa).

Belongs to the geminiviridae protein AC4/C4 family.

In terms of biological role, pathogenicity determinant. May act as a suppressor of RNA-mediated gene silencing, also known as post-transcriptional gene silencing (PTGS), a mechanism of plant viral defense that limits the accumulation of viral RNAs. The chain is Protein AC4 from Cucurbita moschata (Winter crookneck squash).